Reading from the N-terminus, the 533-residue chain is (E)-beta-farnesene synthase (533 aa).

Mg(2+) contacts are provided by Asp286, Asp290, Asn430, Ser434, and Glu438. The short motif at 286–290 is the DDXXD motif element; that stretch reads DDMMD.

Belongs to the terpene synthase family. The cofactor is Mg(2+). Requires Co(2+) as cofactor. Mn(2+) is required as a cofactor.

The protein localises to the cytoplasm. It catalyses the reaction (2E,6E)-farnesyl diphosphate = (E)-beta-farnesene + diphosphate. The protein operates within secondary metabolite biosynthesis; terpenoid biosynthesis. Its function is as follows. Sesquiterpene cyclase catalyzing the production of sixfold more beta-farnesene than alpha-bergamotene from farnesyl diphosphate. Involved in indirect defense by producing volatile signals attracting natural enemies of herbivores. In Zea diploperennis (Diploperennial teosinte), this protein is (E)-beta-farnesene synthase.